The sequence spans 465 residues: Putative mannose-1-phosphate guanylyltransferase (465 aa).

It belongs to the mannose-6-phosphate isomerase type 2 family.

It catalyses the reaction alpha-D-mannose 1-phosphate + GTP + H(+) = GDP-alpha-D-mannose + diphosphate. The protein operates within nucleotide-sugar biosynthesis; GDP-alpha-D-mannose biosynthesis; GDP-alpha-D-mannose from alpha-D-mannose 1-phosphate (GTP route): step 1/1. It participates in bacterial outer membrane biogenesis; LPS O-antigen biosynthesis. This is Putative mannose-1-phosphate guanylyltransferase (rfbA) from Vibrio cholerae serotype O1 (strain ATCC 39315 / El Tor Inaba N16961).